The sequence spans 141 residues: NADH dehydrogenase [ubiquinone] 1 alpha subcomplex subunit 11 (141 aa).

The residue at position 2 (Ala-2) is an N-acetylalanine. Transmembrane regions (helical) follow at residues 22 to 43 and 58 to 80; these read TYATTSIGGAAGLVVSAYSVAL and RYTFTAAAIGAIFGLTSCISAQV.

In terms of assembly, complex I is composed of 45 different subunits.

It is found in the mitochondrion inner membrane. Functionally, accessory subunit of the mitochondrial membrane respiratory chain NADH dehydrogenase (Complex I), that is believed not to be involved in catalysis. Complex I functions in the transfer of electrons from NADH to the respiratory chain. The immediate electron acceptor for the enzyme is believed to be ubiquinone. The polypeptide is NADH dehydrogenase [ubiquinone] 1 alpha subcomplex subunit 11 (NDUFA11) (Bos taurus (Bovine)).